A 689-amino-acid polypeptide reads, in one-letter code: Homoaconitase, mitochondrial (689 aa).

The transit peptide at 1–17 (MVVLRRSFHVYTRLQRG) directs the protein to the mitochondrion. C336, C403, and C406 together coordinate [4Fe-4S] cluster.

This sequence belongs to the aconitase/IPM isomerase family. Requires [4Fe-4S] cluster as cofactor.

The protein localises to the mitochondrion. It catalyses the reaction (2R,3S)-homoisocitrate = cis-homoaconitate + H2O. The protein operates within amino-acid biosynthesis; L-lysine biosynthesis via AAA pathway; L-alpha-aminoadipate from 2-oxoglutarate: step 3/5. In terms of biological role, catalyzes the reversible hydration of cis-homoaconitate to (2R,3S)-homoisocitrate, a step in the alpha-aminoadipate pathway for lysine biosynthesis. The chain is Homoaconitase, mitochondrial (LYS4) from Candida glabrata (strain ATCC 2001 / BCRC 20586 / JCM 3761 / NBRC 0622 / NRRL Y-65 / CBS 138) (Yeast).